The sequence spans 351 residues: Synaptonemal complex central element protein 1 (351 aa).

Polar residues predominate over residues 1–10 (MAGRSLTSKA). Disordered stretches follow at residues 1 to 31 (MAGR…TSSQ) and 267 to 351 (KCQQ…KELF). The stretch at 52 to 290 (RVEVLINRIN…ELEKHGMQVP (239 aa)) forms a coiled coil.

The protein belongs to the SYCE family. In terms of assembly, homodimer. Found in a complex with SYCP1 and SYCE2. Interacts with SYCP1, SYCE2 and SYCE3. Interacts with SIX6OS1.

The protein localises to the nucleus. Its subcellular location is the chromosome. Major component of the transverse central element of synaptonemal complexes (SCS), formed between homologous chromosomes during meiotic prophase. Requires SYCP1 in order to be incorporated into the central element. May have a role in the synaptonemal complex assembly, stabilization and recombination. This Homo sapiens (Human) protein is Synaptonemal complex central element protein 1 (SYCE1).